We begin with the raw amino-acid sequence, 139 residues long: Tol-Pal system protein TolR (139 aa).

The helical transmembrane segment at 15–35 (IVPFLDVLLVLVLIFMATAPI) threads the bilayer.

This sequence belongs to the ExbD/TolR family. As to quaternary structure, the Tol-Pal system is composed of five core proteins: the inner membrane proteins TolA, TolQ and TolR, the periplasmic protein TolB and the outer membrane protein Pal. They form a network linking the inner and outer membranes and the peptidoglycan layer.

It localises to the cell inner membrane. Its function is as follows. Part of the Tol-Pal system, which plays a role in outer membrane invagination during cell division and is important for maintaining outer membrane integrity. The sequence is that of Tol-Pal system protein TolR from Haemophilus influenzae (strain ATCC 51907 / DSM 11121 / KW20 / Rd).